A 513-amino-acid polypeptide reads, in one-letter code: Trigger factor (513 aa).

The 86-residue stretch at 164-249 (GDQIIIDFLG…VKAVKNAGEF (86 aa)) folds into the PPIase FKBP-type domain. The disordered stretch occupies residues 436-513 (QAAIEAEEGA…KAPAKKKAEG (78 aa)). Residues 452-461 (AKKAPAKKKA) show a composition bias toward basic residues. Residues 489–498 (ADEAPAAEEA) show a composition bias toward low complexity. Residues 501 to 513 (AKKKAPAKKKAEG) show a composition bias toward basic residues.

The protein belongs to the FKBP-type PPIase family. Tig subfamily.

The protein localises to the cytoplasm. The enzyme catalyses [protein]-peptidylproline (omega=180) = [protein]-peptidylproline (omega=0). Involved in protein export. Acts as a chaperone by maintaining the newly synthesized protein in an open conformation. Functions as a peptidyl-prolyl cis-trans isomerase. In Novosphingobium aromaticivorans (strain ATCC 700278 / DSM 12444 / CCUG 56034 / CIP 105152 / NBRC 16084 / F199), this protein is Trigger factor.